The primary structure comprises 891 residues: DNA mismatch repair protein MutS (891 aa).

Position 646–653 (646–653) interacts with ATP; it reads GPNMAGKS.

The protein belongs to the DNA mismatch repair MutS family.

This protein is involved in the repair of mismatches in DNA. It is possible that it carries out the mismatch recognition step. This protein has a weak ATPase activity. The sequence is that of DNA mismatch repair protein MutS from Rickettsia massiliae (strain Mtu5).